The sequence spans 279 residues: Protoheme IX farnesyltransferase (279 aa).

9 helical membrane-spanning segments follow: residues 5 to 25 (LILL…AGYL), 33 to 53 (IAQA…AAAF), 84 to 103 (LAYS…LLLG), 108 to 125 (LFVF…TVIL), 133 to 153 (ILGG…LGAG), 159 to 179 (AVLI…ALAY), 201 to 221 (AAVA…MTLY), 222 to 242 (LAFG…VATI), and 256 to 276 (AMWK…LALI).

It belongs to the UbiA prenyltransferase family. Protoheme IX farnesyltransferase subfamily.

It is found in the cell membrane. It carries out the reaction heme b + (2E,6E)-farnesyl diphosphate + H2O = Fe(II)-heme o + diphosphate. The protein operates within porphyrin-containing compound metabolism; heme O biosynthesis; heme O from protoheme: step 1/1. Its function is as follows. Converts heme B (protoheme IX) to heme O by substitution of the vinyl group on carbon 2 of heme B porphyrin ring with a hydroxyethyl farnesyl side group. The protein is Protoheme IX farnesyltransferase of Pyrobaculum arsenaticum (strain DSM 13514 / JCM 11321 / PZ6).